Consider the following 158-residue polypeptide: Transcription elongation factor GreA (158 aa).

Residues E53–Q73 adopt a coiled-coil conformation.

It belongs to the GreA/GreB family.

In terms of biological role, necessary for efficient RNA polymerase transcription elongation past template-encoded arresting sites. The arresting sites in DNA have the property of trapping a certain fraction of elongating RNA polymerases that pass through, resulting in locked ternary complexes. Cleavage of the nascent transcript by cleavage factors such as GreA or GreB allows the resumption of elongation from the new 3'terminus. GreA releases sequences of 2 to 3 nucleotides. This is Transcription elongation factor GreA from Pseudomonas aeruginosa (strain ATCC 15692 / DSM 22644 / CIP 104116 / JCM 14847 / LMG 12228 / 1C / PRS 101 / PAO1).